A 291-amino-acid chain; its full sequence is 4-hydroxy-tetrahydrodipicolinate synthase (291 aa).

Threonine 44 lines the pyruvate pocket. The active-site Proton donor/acceptor is the tyrosine 132. The active-site Schiff-base intermediate with substrate is the lysine 160. Residue isoleucine 202 coordinates pyruvate.

It belongs to the DapA family. Homotetramer; dimer of dimers.

It localises to the cytoplasm. The enzyme catalyses L-aspartate 4-semialdehyde + pyruvate = (2S,4S)-4-hydroxy-2,3,4,5-tetrahydrodipicolinate + H2O + H(+). It functions in the pathway amino-acid biosynthesis; L-lysine biosynthesis via DAP pathway; (S)-tetrahydrodipicolinate from L-aspartate: step 3/4. Functionally, catalyzes the condensation of (S)-aspartate-beta-semialdehyde [(S)-ASA] and pyruvate to 4-hydroxy-tetrahydrodipicolinate (HTPA). This chain is 4-hydroxy-tetrahydrodipicolinate synthase, found in Syntrophus aciditrophicus (strain SB).